The following is a 620-amino-acid chain: 1-deoxy-D-xylulose-5-phosphate synthase (620 aa).

Residues His-80 and 121–123 contribute to the thiamine diphosphate site; that span reads GHS. Asp-152 lines the Mg(2+) pocket. Thiamine diphosphate-binding positions include 153 to 154, Asn-181, Tyr-288, and Glu-370; that span reads GA. Residue Asn-181 coordinates Mg(2+).

It belongs to the transketolase family. DXPS subfamily. Homodimer. Mg(2+) serves as cofactor. Requires thiamine diphosphate as cofactor.

The catalysed reaction is D-glyceraldehyde 3-phosphate + pyruvate + H(+) = 1-deoxy-D-xylulose 5-phosphate + CO2. Its pathway is metabolic intermediate biosynthesis; 1-deoxy-D-xylulose 5-phosphate biosynthesis; 1-deoxy-D-xylulose 5-phosphate from D-glyceraldehyde 3-phosphate and pyruvate: step 1/1. Functionally, catalyzes the acyloin condensation reaction between C atoms 2 and 3 of pyruvate and glyceraldehyde 3-phosphate to yield 1-deoxy-D-xylulose-5-phosphate (DXP). The protein is 1-deoxy-D-xylulose-5-phosphate synthase of Klebsiella pneumoniae subsp. pneumoniae (strain ATCC 700721 / MGH 78578).